The chain runs to 157 residues: GTP-dependent dephospho-CoA kinase (157 aa).

Residues Asp-40, Asp-59, Lys-61, Glu-107, and Asp-128 each coordinate GTP.

This sequence belongs to the GTP-dependent DPCK family.

The catalysed reaction is 3'-dephospho-CoA + GTP = GDP + CoA + H(+). It participates in cofactor biosynthesis; coenzyme A biosynthesis. Its function is as follows. Catalyzes the GTP-dependent phosphorylation of the 3'-hydroxyl group of dephosphocoenzyme A to form coenzyme A (CoA). The chain is GTP-dependent dephospho-CoA kinase from Desulfurococcus amylolyticus (strain DSM 18924 / JCM 16383 / VKM B-2413 / 1221n) (Desulfurococcus kamchatkensis).